An 85-amino-acid chain; its full sequence is uncharacterized protein (85 aa).

A signal peptide spans 1–19 (MKTIFTVGAVVLATCLLSG). Residue C20 is the site of N-palmitoyl cysteine attachment. Residue C20 is the site of S-diacylglycerol cysteine attachment.

The protein localises to the cell outer membrane. This is an uncharacterized protein from Escherichia coli (strain K12).